Consider the following 201-residue polypeptide: Dephospho-CoA kinase (201 aa).

The DPCK domain maps to 4 to 201 (AFFVTASIAC…VIQEISKGKM (198 aa)). Residue 12-17 (ACGKST) coordinates ATP.

The protein belongs to the CoaE family.

The protein localises to the cytoplasm. The enzyme catalyses 3'-dephospho-CoA + ATP = ADP + CoA + H(+). The protein operates within cofactor biosynthesis; coenzyme A biosynthesis; CoA from (R)-pantothenate: step 5/5. Catalyzes the phosphorylation of the 3'-hydroxyl group of dephosphocoenzyme A to form coenzyme A. In Campylobacter jejuni (strain RM1221), this protein is Dephospho-CoA kinase.